The primary structure comprises 450 residues: V-type proton ATPase subunit H (450 aa).

It belongs to the V-ATPase H subunit family. In terms of assembly, V-ATPase is a heteromultimeric enzyme composed of a peripheral catalytic V1 complex (components A to H) attached to an integral membrane V0 proton pore complex (components: a, c, c', c'', d, e, f and VOA1).

Its subcellular location is the vacuole membrane. Its function is as follows. Subunit of the V1 complex of vacuolar(H+)-ATPase (V-ATPase), a multisubunit enzyme composed of a peripheral complex (V1) that hydrolyzes ATP and a membrane integral complex (V0) that translocates protons. V-ATPase is responsible for acidifying and maintaining the pH of intracellular compartments. This subunit is essential for activity, but not assembly, of the enzyme complex. This subunit is also required for silencing the ATPase activity of V-ATPase when V1 is detached from V0. This Schizosaccharomyces pombe (strain 972 / ATCC 24843) (Fission yeast) protein is V-type proton ATPase subunit H (vma13).